Reading from the N-terminus, the 425-residue chain is Enolase (425 aa).

A (2R)-2-phosphoglycerate-binding site is contributed by Gln162. Glu204 acts as the Proton donor in catalysis. 3 residues coordinate Mg(2+): Asp241, Glu282, and Asp309. Lys334, Arg363, Ser364, and Lys385 together coordinate (2R)-2-phosphoglycerate. Lys334 serves as the catalytic Proton acceptor.

It belongs to the enolase family. Mg(2+) serves as cofactor.

It is found in the cytoplasm. Its subcellular location is the secreted. The protein resides in the cell surface. The enzyme catalyses (2R)-2-phosphoglycerate = phosphoenolpyruvate + H2O. It participates in carbohydrate degradation; glycolysis; pyruvate from D-glyceraldehyde 3-phosphate: step 4/5. In terms of biological role, catalyzes the reversible conversion of 2-phosphoglycerate (2-PG) into phosphoenolpyruvate (PEP). It is essential for the degradation of carbohydrates via glycolysis. In Corynebacterium jeikeium (strain K411), this protein is Enolase.